A 336-amino-acid chain; its full sequence is Anthranilate phosphoribosyltransferase (336 aa).

Residues Gly82, 85–86 (GD), Thr90, 92–95 (NIST), 110–118 (KHGNRFASG), and Ser122 contribute to the 5-phospho-alpha-D-ribose 1-diphosphate site. Residue Gly82 participates in anthranilate binding. Position 94 (Ser94) interacts with Mg(2+). Position 113 (Asn113) interacts with anthranilate. Arg168 is an anthranilate binding site. Mg(2+) contacts are provided by Asp227 and Glu228.

This sequence belongs to the anthranilate phosphoribosyltransferase family. Homodimer. It depends on Mg(2+) as a cofactor.

The catalysed reaction is N-(5-phospho-beta-D-ribosyl)anthranilate + diphosphate = 5-phospho-alpha-D-ribose 1-diphosphate + anthranilate. Its pathway is amino-acid biosynthesis; L-tryptophan biosynthesis; L-tryptophan from chorismate: step 2/5. Catalyzes the transfer of the phosphoribosyl group of 5-phosphorylribose-1-pyrophosphate (PRPP) to anthranilate to yield N-(5'-phosphoribosyl)-anthranilate (PRA). In Desulfitobacterium hafniense (strain DSM 10664 / DCB-2), this protein is Anthranilate phosphoribosyltransferase.